A 358-amino-acid chain; its full sequence is Phospho-N-acetylmuramoyl-pentapeptide-transferase (358 aa).

A run of 10 helical transmembrane segments spans residues 27-47 (IYAM…VIRV), 73-93 (TMGG…WADL), 97-117 (YIWT…VDDY), 134-154 (MFWQ…KPGF), 170-190 (LWFW…NAVN), 197-217 (GLAI…SYVA), 233-253 (GAGE…GFLW), 261-281 (VFMG…IAVI), 286-306 (ILLV…IFQV), and 335-355 (KIIV…ISTL).

It belongs to the glycosyltransferase 4 family. MraY subfamily. Mg(2+) serves as cofactor.

The protein resides in the cell inner membrane. It carries out the reaction UDP-N-acetyl-alpha-D-muramoyl-L-alanyl-gamma-D-glutamyl-meso-2,6-diaminopimeloyl-D-alanyl-D-alanine + di-trans,octa-cis-undecaprenyl phosphate = di-trans,octa-cis-undecaprenyl diphospho-N-acetyl-alpha-D-muramoyl-L-alanyl-D-glutamyl-meso-2,6-diaminopimeloyl-D-alanyl-D-alanine + UMP. The protein operates within cell wall biogenesis; peptidoglycan biosynthesis. In terms of biological role, catalyzes the initial step of the lipid cycle reactions in the biosynthesis of the cell wall peptidoglycan: transfers peptidoglycan precursor phospho-MurNAc-pentapeptide from UDP-MurNAc-pentapeptide onto the lipid carrier undecaprenyl phosphate, yielding undecaprenyl-pyrophosphoryl-MurNAc-pentapeptide, known as lipid I. In Pelobacter propionicus (strain DSM 2379 / NBRC 103807 / OttBd1), this protein is Phospho-N-acetylmuramoyl-pentapeptide-transferase.